An 867-amino-acid polypeptide reads, in one-letter code: DNA mismatch repair protein MutS (867 aa).

Residue 606–613 (GPNMSGKS) coordinates ATP.

This sequence belongs to the DNA mismatch repair MutS family.

Functionally, this protein is involved in the repair of mismatches in DNA. It is possible that it carries out the mismatch recognition step. This protein has a weak ATPase activity. The protein is DNA mismatch repair protein MutS of Oceanobacillus iheyensis (strain DSM 14371 / CIP 107618 / JCM 11309 / KCTC 3954 / HTE831).